A 233-amino-acid chain; its full sequence is Ras-related protein Rab-20 (233 aa).

Residues Gly17, Lys18, Thr19, Asp32, and Thr36 each contribute to the GTP site. Thr19 contacts Mg(2+). 2 short sequence motifs (switch) span residues 28-41 and 55-72; these read RRFP…GGAF and DTAG…YCRG. Residues Thr36 and Asp55 each contribute to the Mg(2+) site. 4 residues coordinate GTP: Gly58, Asn113, Lys114, and Asp116. Residues 119 to 130 are compositionally biased toward basic and acidic residues; the sequence is SERDTEGGEKEG. Residues 119–138 are disordered; that stretch reads SERDTEGGEKEGPASGKVGS. Residues Ala183 and Lys184 each contribute to the GTP site. S-geranylgeranyl cysteine attachment occurs at residues Cys231 and Cys232.

The protein belongs to the small GTPase superfamily. Rab family. Requires Mg(2+) as cofactor. As to expression, present in a variety of tissues, but not in brain.

It is found in the cytoplasmic vesicle. Its subcellular location is the phagosome. It localises to the phagosome membrane. The protein resides in the golgi apparatus. The catalysed reaction is GTP + H2O = GDP + phosphate + H(+). Regulated by guanine nucleotide exchange factors (GEFs) which promote the exchange of bound GDP for free GTP. Regulated by GTPase activating proteins (GAPs) which increase the GTP hydrolysis activity. Inhibited by GDP dissociation inhibitors (GDIs). In terms of biological role, plays a role in apical endocytosis/recycling. Plays a role in the maturation and acidification of phagosomes that engulf pathogens, such as S.aureus and Mycobacterium. Plays a role in the fusion of phagosomes with lysosomes. This chain is Ras-related protein Rab-20, found in Mus musculus (Mouse).